We begin with the raw amino-acid sequence, 812 residues long: Lon protease (812 aa).

The 194-residue stretch at 22–215 (YAVLPLRDIV…KALSFMEAEI (194 aa)) folds into the Lon N-terminal domain. 367-374 (GPPGVGKT) lines the ATP pocket. The region spanning 602–783 (EDQVGVVTGL…GEVLKHTLVR (182 aa)) is the Lon proteolytic domain. Active-site residues include serine 689 and lysine 732. The interval 787-812 (PIEWTEQENPTAVPPVEDEAGASLAH) is disordered.

The protein belongs to the peptidase S16 family. In terms of assembly, homohexamer. Organized in a ring with a central cavity.

It localises to the cytoplasm. It carries out the reaction Hydrolysis of proteins in presence of ATP.. ATP-dependent serine protease that mediates the selective degradation of mutant and abnormal proteins as well as certain short-lived regulatory proteins. Required for cellular homeostasis and for survival from DNA damage and developmental changes induced by stress. Degrades polypeptides processively to yield small peptide fragments that are 5 to 10 amino acids long. Binds to DNA in a double-stranded, site-specific manner. The sequence is that of Lon protease from Brucella suis biovar 1 (strain 1330).